Here is a 740-residue protein sequence, read N- to C-terminus: Alpha-1,6-mannosylglycoprotein 6-beta-N-acetylglucosaminyltransferase A (740 aa).

Over 1-13 (MAFFSPWKLSSQK) the chain is Cytoplasmic. A helical; Signal-anchor for type II membrane protein membrane pass occupies residues 14 to 30 (LGFFLVTFGFIWGMMLL). Residues 31–740 (HFTIQQRTQP…GQVALCKDCL (710 aa)) are Lumenal-facing. 3 N-linked (GlcNAc...) asparagine glycosylation sites follow: asparagine 109, asparagine 114, and asparagine 117. Disulfide bonds link cysteine 144-cysteine 182, cysteine 155-cysteine 195, cysteine 171-cysteine 337, cysteine 371-cysteine 625, cysteine 648-cysteine 723, cysteine 652-cysteine 725, cysteine 659-cysteine 712, cysteine 680-cysteine 701, and cysteine 736-cysteine 739. Positions 212–740 (NSLAEIRTDF…GQVALCKDCL (529 aa)) are sufficient for catalytic activity. N-linked (GlcNAc...) asparagine glycosylation occurs at asparagine 333. 377-378 (DS) is a substrate binding site. 2 N-linked (GlcNAc...) asparagine glycosylation sites follow: asparagine 432 and asparagine 446. UDP-N-acetyl-alpha-D-glucosamine is bound at residue glutamate 525. Lysine 553 contacts substrate.

It belongs to the glycosyltransferase 18 family. In terms of processing, N-glycosylated. Post-translationally, a secreted form is released from the membrane after cleavage by gamma-secretase. As to expression, detected in kidney (at protein level). Detected in kidney.

It localises to the golgi apparatus membrane. The protein localises to the secreted. It carries out the reaction N(4)-{beta-D-GlcNAc-(1-&gt;2)-[beta-D-GlcNAc-(1-&gt;4)]-alpha-D-Man-(1-&gt;3)-[beta-D-GlcNAc-(1-&gt;2)-alpha-D-Man-(1-&gt;6)]-beta-D-Man-(1-&gt;4)-beta-D-GlcNAc-(1-&gt;4)-beta-D-GlcNAc}-L-asparaginyl-[protein] + UDP-N-acetyl-alpha-D-glucosamine = N(4)-{beta-D-GlcNAc-(1-&gt;2)-[beta-D-GlcNAc-(1-&gt;4)]-alpha-D-Man-(1-&gt;3)-[beta-D-GlcNAc-(1-&gt;2)-[beta-D-GlcNAc-(1-&gt;6)]-alpha-D-Man-(1-&gt;6)]-beta-D-Man-(1-&gt;4)-beta-D-GlcNAc-(1-&gt;4)-beta-D-GlcNAc}-L-asparaginyl-[protein] + UDP + H(+). Its pathway is protein modification; protein glycosylation. Catalyzes the addition of N-acetylglucosamine (GlcNAc) in beta 1-6 linkage to the alpha-linked mannose of biantennary N-linked oligosaccharides. Catalyzes an important step in the biosynthesis of branched, complex-type N-glycans, such as those found on EGFR, TGFR (TGF-beta receptor) and CDH2. Via its role in the biosynthesis of complex N-glycans, plays an important role in the activation of cellular signaling pathways, reorganization of the actin cytoskeleton, cell-cell adhesion and cell migration. MGAT5-dependent EGFR N-glycosylation enhances the interaction between EGFR and LGALS3 and thereby prevents rapid EGFR endocytosis and prolongs EGFR signaling. Required for efficient interaction between TGFB1 and its receptor. Enhances activation of intracellular signaling pathways by several types of growth factors, including FGF2, PDGF, IGF, TGFB1 and EGF. MGAT5-dependent CDH2 N-glycosylation inhibits CDH2-mediated homotypic cell-cell adhesion and contributes to the regulation of downstream signaling pathways. Promotes cell migration. Contributes to the regulation of the inflammatory response. MGAT5-dependent TCR N-glycosylation enhances the interaction between TCR and LGALS3, limits agonist-induced TCR clustering, and thereby dampens TCR-mediated responses to antigens. Required for normal leukocyte evasation and accumulation at sites of inflammation. Inhibits attachment of monocytes to the vascular endothelium and subsequent monocyte diapedesis. Its function is as follows. Promotes proliferation of umbilical vein endothelial cells and angiogenesis, at least in part by promoting the release of the growth factor FGF2 from the extracellular matrix. The polypeptide is Alpha-1,6-mannosylglycoprotein 6-beta-N-acetylglucosaminyltransferase A (Mgat5) (Rattus norvegicus (Rat)).